A 320-amino-acid chain; its full sequence is Protein PXR1 (320 aa).

Positions 1–11 are enriched in basic residues; the sequence is MGLAGPRKRTK. Residues 1 to 24 form a disordered region; it reads MGLAGPRKRTKISHDPNNTAWSRS. Over residues 15-24 the composition is skewed to polar residues; sequence DPNNTAWSRS. In terms of domain architecture, G-patch spans 25–79; the sequence is TSGYGHKIMSAQGWTPGSFLGASNAAHADHFTAGSAGHIRVILKDDNLGLGAKLR. The segment at 152–298 is disordered; that stretch reads GEEVQTPQIS…MGRQFTRGRH (147 aa). Basic residues predominate over residues 169 to 182; the sequence is KRPKKARKKEKRRA. Basic and acidic residues-rich tracts occupy residues 203–214, 243–256, and 269–288; these read RKENKEKKKSSD, KDPE…HDDS, and QESR…EHRP.

Belongs to the PINX1 family.

The protein localises to the nucleus. It is found in the nucleolus. In terms of biological role, involved in rRNA-processing at A0, A1 and A2 sites and negatively regulates telomerase. The protein is Protein PXR1 (PXR1) of Ajellomyces capsulatus (strain NAm1 / WU24) (Darling's disease fungus).